The chain runs to 707 residues: Choline transporter-like protein 4 (707 aa).

Topologically, residues 1 to 32 are cytoplasmic; that stretch reads MGRKQNENEAHGNSAKYDPSFRGPIKNRGCTD. A helical transmembrane segment spans residues 33–53; the sequence is IICCVLFLIFILGYIIVGLVA. Residues 54-227 lie on the Extracellular side of the membrane; it reads WVYGDPRQVL…KIFEDFAQSW (174 aa). Residues Asn67, Asn185, Asn195, and Asn196 are each glycosylated (N-linked (GlcNAc...) asparagine). A helical membrane pass occupies residues 228-248; that stretch reads YWILVALGVALALSLLFILLL. Over 249-250 the chain is Cytoplasmic; that stretch reads RL. A helical membrane pass occupies residues 251 to 271; that stretch reads VAAPLVLLLIVGVLAVLAYGI. Residues 272–307 are Extracellular-facing; sequence YHCWQQYQVFRDKGASITQLGFTTNFSAYQSVKETW. Asn296 is a glycosylation site (N-linked (GlcNAc...) asparagine). A helical membrane pass occupies residues 308-328; it reads LAALIVLAVLEGILLLMLIFL. The Cytoplasmic portion of the chain corresponds to 329–356; sequence RQRIRIAIALLKEASRAVGQMMSTMFYP. Residues 357 to 377 form a helical membrane-spanning segment; that stretch reads LVTFVLLVICIGYWAVTALYL. The Extracellular segment spans residues 378–452; sequence ATSGQPQYIY…GVLGLFWTVN (75 aa). N-linked (GlcNAc...) asparagine glycosylation is found at Asn391, Asn403, and Asn413. Residues 453 to 473 traverse the membrane as a helical segment; sequence WVLALGQCVLAGAFASFYWAF. At 474–498 the chain is on the cytoplasmic side; sequence HKPRDIPTFPLSSAFIRTLRYHTGS. The helical transmembrane segment at 499–519 threads the bilayer; it reads LAFGALILSLVQIARVILEYI. At 520–557 the chain is on the extracellular side; sequence DHKLRGSQNPVARCIICCFKCCLWCLEKFIKFLNRNAY. Residues 558–578 form a helical membrane-spanning segment; it reads IMIAIYGKNFCVSAKNAFMLL. Residues 579 to 594 are Cytoplasmic-facing; sequence MRNVLRVVVLDKVTDL. Residues 595-615 form a helical membrane-spanning segment; sequence LLFFGKLLVVGGVGVLSFFFF. The Extracellular portion of the chain corresponds to 616–635; that stretch reads SGRIKGLGKDFENPNLNYYW. A helical transmembrane segment spans residues 636-656; it reads LPIMTSIMGAYVIASGFFSVF. Topologically, residues 657–707 are cytoplasmic; it reads GMCVDTLFLCFLEDLERNDGSQERPYYMPKALLKILGKKNEAPTGGKTRKK.

The protein belongs to the CTL (choline transporter-like) family. N-glycosylated; N-glycosylation of Asn-67 and Asn-391 is required for a proper thiamine pyrophosphate uptake. In terms of tissue distribution, expressed in colon and cecum.

Its subcellular location is the membrane. It localises to the apical cell membrane. The catalysed reaction is choline(out) + n H(+)(in) = choline(in) + n H(+)(out). It carries out the reaction thiamine diphosphate(out) = thiamine diphosphate(in). Its function is as follows. Choline transporter that plays a role in the choline-acetylcholine system and is required to the efferent innervation of hair cells in the olivocochlear bundle for the maintenance of physiological function of outer hair cells and the protection of hair cells from acoustic injury. Also described as a thiamine pyrophosphate transporter in colon, may mediate the absorption of microbiota-generated thiamine pyrophosphate and contribute to host thiamine (vitamin B1) homeostasis. The protein is Choline transporter-like protein 4 of Mus musculus (Mouse).